Reading from the N-terminus, the 988-residue chain is Isoleucine--tRNA ligase (988 aa).

Residues 60–70 carry the 'HIGH' region motif; it reads PYANGALHMGH. E570 is a binding site for L-isoleucyl-5'-AMP. The 'KMSKS' region signature appears at 611–615; it reads KMSKS. K614 serves as a coordination point for ATP. Positions 957, 960, 977, and 980 each coordinate Zn(2+).

It belongs to the class-I aminoacyl-tRNA synthetase family. IleS type 1 subfamily. In terms of assembly, monomer. Zn(2+) serves as cofactor.

It localises to the cytoplasm. It catalyses the reaction tRNA(Ile) + L-isoleucine + ATP = L-isoleucyl-tRNA(Ile) + AMP + diphosphate. In terms of biological role, catalyzes the attachment of isoleucine to tRNA(Ile). As IleRS can inadvertently accommodate and process structurally similar amino acids such as valine, to avoid such errors it has two additional distinct tRNA(Ile)-dependent editing activities. One activity is designated as 'pretransfer' editing and involves the hydrolysis of activated Val-AMP. The other activity is designated 'posttransfer' editing and involves deacylation of mischarged Val-tRNA(Ile). The sequence is that of Isoleucine--tRNA ligase from Synechocystis sp. (strain ATCC 27184 / PCC 6803 / Kazusa).